Consider the following 169-residue polypeptide: Ubiquitin-fold modifier-conjugating enzyme 1 (169 aa).

The Glycyl thioester intermediate role is filled by C116.

The protein belongs to the ubiquitin-conjugating enzyme family. UFC1 subfamily.

Functionally, E2-like enzyme which forms an intermediate with UFM1 via a thioester linkage. This chain is Ubiquitin-fold modifier-conjugating enzyme 1, found in Branchiostoma floridae (Florida lancelet).